An 81-amino-acid chain; its full sequence is A-kinase anchor protein 7 isoform alpha (81 aa).

Glycine 2 carries the N-myristoyl glycine lipid modification. Positions 2-11 (GQLCCFPFAR) are required for membrane localization. S-palmitoyl cysteine attachment occurs at residues cysteine 5 and cysteine 6. Residues 29-42 (LVRLSKRLVENAVL) are RII-binding. Residues 49–81 (LEETQNKKQPGEGNSTKAEEGDRNGDGSDNNRK) form a disordered region. The segment covering 65–81 (KAEEGDRNGDGSDNNRK) has biased composition (basic and acidic residues).

As to quaternary structure, binds cAMP-dependent protein kinase (PKA). Interacts with PRKCA; only the cytoplasmic form is capable of interacting with PRKCA.

The protein resides in the lateral cell membrane. Targets the cAMP-dependent protein kinase (PKA) to the plasma membrane, and permits functional coupling to the L-type calcium channel. The membrane-associated form reduces epithelial sodium channel (ENaC) activity, whereas the free cytoplasmic form may negatively regulate ENaC channel feedback inhibition by intracellular sodium. The chain is A-kinase anchor protein 7 isoform alpha (Akap7) from Mus musculus (Mouse).